Reading from the N-terminus, the 157-residue chain is Tripartite terminase subunit 2 (157 aa).

The disordered stretch occupies residues 1-69; sequence MSWAKQRVPF…DGEDGHALPD (69 aa). Over residues 11–27 the composition is skewed to acidic residues; sequence LDDDDGEEENDVQDDVD.

It belongs to the herpesviridae TRM2 protein family. Associates with TRM1 and TRM3 to form the tripartite terminase complex.

Its subcellular location is the host nucleus. Functionally, component of the molecular motor that translocates viral genomic DNA in empty capsid during DNA packaging. Forms a tripartite terminase complex together with TRM1 and TRM3 in the host cytoplasm. Once the complex reaches the host nucleus, it interacts with the capsid portal vertex. This portal forms a ring in which genomic DNA is translocated into the capsid. The chain is Tripartite terminase subunit 2 from Homo sapiens (Human).